We begin with the raw amino-acid sequence, 485 residues long: NADH-quinone oxidoreductase subunit N (485 aa).

14 helical membrane-spanning segments follow: residues 8–28 (LIAL…MLSI), 35–55 (FLNA…LWFV), 71–91 (GFAM…CTFA), 105–125 (FYLL…ANHL), 127–147 (SLFL…GYAF), 159–179 (YTIL…LVYA), 203–223 (LLAG…LVPF), 235–255 (PAPV…GVVM), 271–291 (VVLA…ALSQ), 297–317 (LLGY…IALQ), 326–346 (VGVY…VVSL), 373–393 (AAVM…LGFI), 408–430 (WWLV…RVAV), and 455–475 (IVVL…QPLI).

Belongs to the complex I subunit 2 family. In terms of assembly, NDH-1 is composed of 13 different subunits. Subunits NuoA, H, J, K, L, M, N constitute the membrane sector of the complex.

The protein resides in the cell inner membrane. The catalysed reaction is a quinone + NADH + 5 H(+)(in) = a quinol + NAD(+) + 4 H(+)(out). Its function is as follows. NDH-1 shuttles electrons from NADH, via FMN and iron-sulfur (Fe-S) centers, to quinones in the respiratory chain. The immediate electron acceptor for the enzyme in this species is believed to be ubiquinone. Couples the redox reaction to proton translocation (for every two electrons transferred, four hydrogen ions are translocated across the cytoplasmic membrane), and thus conserves the redox energy in a proton gradient. The polypeptide is NADH-quinone oxidoreductase subunit N (Escherichia coli O139:H28 (strain E24377A / ETEC)).